Reading from the N-terminus, the 330-residue chain is Polygalacturonase inhibitor 2 (330 aa).

The N-terminal stretch at 1-21 (MDKTMTLFLLLSTLLLTTSLA) is a signal peptide. Cystine bridges form between C25–C55 and C56–C63. 10 LRR repeats span residues 69–93 (NHRVTSLIIQDGEISGQIPPEVGDL), 94–117 (PYLTSLIFRKLTNLTGHIQPTIAK), 118–141 (LKNLTFLRLSWTNLTGPVPEFLSQ), 142–166 (LKNLEYIDLSFNDLSGSIPSSLSSL), 167–192 (RKLEYLELSRNKLTGPIPESFGTFSG), 194–215 (VPSLFLSHNQLSGTIPKSLGNP), 217–237 (FYRIDLSRNKLQGDASILFGA), 238–260 (KKTTWIVDISRNMFQFDLSKVKL), 261–285 (AKTLNNLDMNHNGITGSIPAEWSKA), and 287–308 (FQLLNVSYNRLCGRIPKGEYIQ). N106, N120, and N130 each carry an N-linked (GlcNAc...) asparagine glycan. Residue N291 is glycosylated (N-linked (GlcNAc...) asparagine). Cystine bridges form between C298-C320 and C322-C329.

Belongs to the polygalacturonase-inhibiting protein family.

The protein localises to the secreted. It is found in the cell wall. The protein resides in the membrane. Its function is as follows. Inhibitor of fungal polygalacturonase. It is an important factor for plant resistance to phytopathogenic fungi. The protein is Polygalacturonase inhibitor 2 (PGIP2) of Arabidopsis thaliana (Mouse-ear cress).